The chain runs to 75 residues: Protein Tlp homolog (75 aa).

Residues 53–75 (REALDGMREEIKDEARDKKNGYM) are disordered.

It belongs to the Tlp family.

This is Protein Tlp homolog from Clostridium botulinum (strain Langeland / NCTC 10281 / Type F).